The sequence spans 37 residues: Hemextin A (37 aa).

As to quaternary structure, heterotetramer composed of two A and two B chains; non-covalently linked. Does not exist as a complex in the crude venom. Post-translationally, may contain several disulfide bonds. Expressed by the venom gland.

The protein resides in the secreted. In terms of biological role, hemextin A (monomer): exhibits mild anticoagulant activity. It specifically inhibits the activation of FX (F10) by the TF-FVIIa complex (extrinsic tenase complex (ETC)) by non-competitively inhibiting the enzymatic activity of FVIIa. Its function is as follows. Hemextin AB complex: specifically inhibits the activation of FX (F10) by the TF-FVIIa complex (extrinsic tenase complex (ETC)) (IC(50)= 100 nM, Ki=25 nM) by non-competitively inhibiting the enzymatic activity of FVIIa. In Hemachatus haemachatus (Rinkhals), this protein is Hemextin A.